A 482-amino-acid chain; its full sequence is ATP-dependent rRNA helicase rrp3 (482 aa).

The disordered stretch occupies residues 1-55 (MSSVKRRKTEKNTSSGLKSKQAKEPKEASPLSSPEPTEENQNNEIEEGTEEEEVT). Positions 44–53 (EIEEGTEEEE) are enriched in acidic residues. Positions 56-84 (KSFKDLGIVDSLCEACDTLGYKAPTPIQR) match the Q motif motif. The Helicase ATP-binding domain occupies 87–258 (IPLALQGRDL…RASLKDPLRV (172 aa)). ATP is bound at residue 100–107 (AETGSGKT). A DEAD box motif is present at residues 206-209 (DEAD). The Helicase C-terminal domain occupies 282 to 430 (HKDTYLIYLL…EYQTVKDEVM (149 aa)). 2 stretches are compositionally biased toward basic and acidic residues: residues 444 to 456 (RNEM…DRGK) and 472 to 482 (RGRDEMDREEG). The disordered stretch occupies residues 444 to 482 (RNEMKNLHEDRGKKGAVLKGRRPANGAKRGRDEMDREEG).

This sequence belongs to the DEAD box helicase family. DDX47/RRP3 subfamily. In terms of assembly, interacts with the SSU processome.

The protein resides in the nucleus. It carries out the reaction ATP + H2O = ADP + phosphate + H(+). Its function is as follows. ATP-dependent rRNA helicase required for pre-ribosomal RNA processing. Involved in the maturation of the 35S-pre-rRNA and to its cleavage to mature 18S rRNA. The protein is ATP-dependent rRNA helicase rrp3 of Sclerotinia sclerotiorum (strain ATCC 18683 / 1980 / Ss-1) (White mold).